A 201-amino-acid polypeptide reads, in one-letter code: UPF0301 protein Mvan_6057 (201 aa).

The protein belongs to the UPF0301 (AlgH) family.

The sequence is that of UPF0301 protein Mvan_6057 from Mycolicibacterium vanbaalenii (strain DSM 7251 / JCM 13017 / BCRC 16820 / KCTC 9966 / NRRL B-24157 / PYR-1) (Mycobacterium vanbaalenii).